Reading from the N-terminus, the 656-residue chain is UvrABC system protein C (656 aa).

The GIY-YIG domain occupies 41–120 (KSSGCYLFKD…IKTNKPYFNI (80 aa)). Positions 230-265 (DDLEVFLERKMNQYSNDLEFENAAKIRDQISGLKLL) constitute a UVR domain.

Belongs to the UvrC family. Interacts with UvrB in an incision complex.

It localises to the cytoplasm. Its function is as follows. The UvrABC repair system catalyzes the recognition and processing of DNA lesions. UvrC both incises the 5' and 3' sides of the lesion. The N-terminal half is responsible for the 3' incision and the C-terminal half is responsible for the 5' incision. This is UvrABC system protein C from Prochlorococcus marinus subsp. pastoris (strain CCMP1986 / NIES-2087 / MED4).